Reading from the N-terminus, the 562-residue chain is MDDHKRPLYLPFAGPAILEAPLINKGSAFTDEERVFFNLEGLLPHVIETIEEQASRAYDQYTNFTNDLDKHIYLRNIQDTNETLYYRLVQNHITEMMPIIYTPTVGMACERFSKNYRRNRGLFISYPNKDRIDDLLNNSTRQKVKIIVVTDGERILGLGDQGIGGMGIPIGKLSLYTSCGGISPAYTLPITLDVGTDNPNLLEDPMYMGWRHQRIGGEEYTEFVEAFMQAVHRRWPDALIQFEDFAQKNAMPLLERYKDQYCCFNDDVQGTAAVTVGSLLAACKAAKTKLSEQRVTFLGAGSAGCGIAEAIVAQMIAEGLSEEQARAQVFMVDRWGLLQDNMPTLLPFQQKLAQKCDDIEGWDNFSENISLLDVVNNAKPTVLIGVSGAPGVFSEEIIKAMHSHCPRPIVFPLSNPTSRVEATPKDLLHWTKGQALVATGSPFEPVVVEDETFEIAQCNNSYIFPGIGLGVLAAGAKRVSNEMLMASSRALAECSPLALDGEGPLLPPLEEIHKVSKHIALAVGKVAIEQGHALPCTDELLEQSIEDNFWTAEYRRYKRTSF.

The active-site Proton donor is the Tyr-101. Residue Arg-154 coordinates NAD(+). Lys-172 (proton acceptor) is an active-site residue. A divalent metal cation-binding residues include Glu-243, Asp-244, and Asp-267. NAD(+)-binding residues include Asp-267 and Asn-415.

It belongs to the malic enzymes family. Homotetramer. The cofactor is Mg(2+). Mn(2+) serves as cofactor.

It catalyses the reaction (S)-malate + NAD(+) = pyruvate + CO2 + NADH. The enzyme catalyses oxaloacetate + H(+) = pyruvate + CO2. In Shewanella sediminis (strain HAW-EB3), this protein is NAD-dependent malic enzyme.